We begin with the raw amino-acid sequence, 160 residues long: Nucleotide-binding protein VS_1405 (160 aa).

The protein belongs to the YajQ family.

Nucleotide-binding protein. This Vibrio atlanticus (strain LGP32) (Vibrio splendidus (strain Mel32)) protein is Nucleotide-binding protein VS_1405.